Consider the following 66-residue polypeptide: Cold shock-like protein CspD (66 aa).

The CSD domain occupies 4–63; sequence GKVKWFNGEKGFGFIEVEGGEDVFVHFSAIQGDGFKTLEEGQEVSFEIVDGNRGPQAANV.

As to quaternary structure, homodimer.

The protein resides in the cytoplasm. The protein is Cold shock-like protein CspD (cspD) of Bacillus cereus.